The following is a 469-amino-acid chain: 3-isopropylmalate dehydratase large subunit (469 aa).

Positions 347, 407, and 410 each coordinate [4Fe-4S] cluster.

This sequence belongs to the aconitase/IPM isomerase family. LeuC type 1 subfamily. In terms of assembly, heterodimer of LeuC and LeuD. The cofactor is [4Fe-4S] cluster.

It catalyses the reaction (2R,3S)-3-isopropylmalate = (2S)-2-isopropylmalate. Its pathway is amino-acid biosynthesis; L-leucine biosynthesis; L-leucine from 3-methyl-2-oxobutanoate: step 2/4. Its function is as follows. Catalyzes the isomerization between 2-isopropylmalate and 3-isopropylmalate, via the formation of 2-isopropylmaleate. The chain is 3-isopropylmalate dehydratase large subunit from Prochlorococcus marinus (strain NATL1A).